A 322-amino-acid polypeptide reads, in one-letter code: ATP-dependent 6-phosphofructokinase (322 aa).

ATP contacts are provided by residues Gly12, 73–74 (RF), and 103–106 (GDGT). Asp104 contacts Mg(2+). 126 to 128 (TID) is a substrate binding site. The active-site Proton acceptor is Asp128. An ADP-binding site is contributed by Arg155. Substrate-binding positions include Arg163 and 170-172 (MGR). ADP contacts are provided by residues 186–188 (GSE), Lys212, and 214–216 (KPS). Residues Glu223, Arg245, and 251 to 254 (HTQR) contribute to the substrate site.

The protein belongs to the phosphofructokinase type A (PFKA) family. ATP-dependent PFK group I subfamily. Prokaryotic clade 'B1' sub-subfamily. As to quaternary structure, homotetramer. Mg(2+) serves as cofactor.

Its subcellular location is the cytoplasm. The enzyme catalyses beta-D-fructose 6-phosphate + ATP = beta-D-fructose 1,6-bisphosphate + ADP + H(+). Its pathway is carbohydrate degradation; glycolysis; D-glyceraldehyde 3-phosphate and glycerone phosphate from D-glucose: step 3/4. With respect to regulation, allosterically activated by ADP and other diphosphonucleosides, and allosterically inhibited by phosphoenolpyruvate. Functionally, catalyzes the phosphorylation of D-fructose 6-phosphate to fructose 1,6-bisphosphate by ATP, the first committing step of glycolysis. The sequence is that of ATP-dependent 6-phosphofructokinase from Mesomycoplasma hyopneumoniae (strain 7448) (Mycoplasma hyopneumoniae).